The following is a 568-amino-acid chain: Potassium-transporting ATPase potassium-binding subunit (568 aa).

10 helical membrane-spanning segments follow: residues 3–23, 68–88, 133–153, 180–200, 256–276, 281–301, 375–395, 421–441, 497–517, and 535–555; these read TEVLGVIAQIVLMVVLSYPLG, LLVVNLFWFLWGMVLLVTQGV, FVIMLFQFITAATGMAAMAGI, LLPLSLVVGFILIVQGTPMGF, VECWSILIIPMAMAFAFGFYL, LGYSIYGVMLFAYLVGVCINV, FGGVGVGWMNYFTFIIIAVFI, IVALLHPFIILVGTALAAYLF, IVLILGRFVPIVGQVAIAGIL, and VTFGVMTFAVIFIVAALSFFP.

It belongs to the KdpA family. In terms of assembly, the system is composed of three essential subunits: KdpA, KdpB and KdpC.

Its subcellular location is the cell inner membrane. In terms of biological role, part of the high-affinity ATP-driven potassium transport (or Kdp) system, which catalyzes the hydrolysis of ATP coupled with the electrogenic transport of potassium into the cytoplasm. This subunit binds the periplasmic potassium ions and delivers the ions to the membrane domain of KdpB through an intramembrane tunnel. This is Potassium-transporting ATPase potassium-binding subunit from Phocaeicola vulgatus (strain ATCC 8482 / DSM 1447 / JCM 5826 / CCUG 4940 / NBRC 14291 / NCTC 11154) (Bacteroides vulgatus).